Reading from the N-terminus, the 548-residue chain is MEFAEFAARAAEIESEPADLETVDLVATLCADAGDDLGTVARFVQGRVFPAHDSTKLDIGPSLCYEALAKAAGPNVDSDDIERRLAEVGEIGAVAESLDLGGQQGLAAFGGGTDREALTVSGVEETLQALAAAAGDGSTDAKRDRLFDLFNRAEPTEARFLARLVLGEMRVGVGEGTVRDAIAAAFEVPEPDVERALQVANDCGLVAETARDDGAAGLDDIGLVVGRPVKAMLAQAGTAVEALDEWGTAAVETKYDGARVQVHYDGDSARLFSRNLEEVTEPLPEVVEFVEQSLSVPAILDGEVVAVDDDGTPRPFQEILRRFRRKHDVAAAREDVSVELYAFDCLHVDGEDLLDTPLSERHDRLESLLADGVSPLSYADDADEVADIEADALDAGHEGIMLKNPDSTYTPGSRGKNWLKRKPDVETLDLVVTGAEWGEGRRANLLGTFVVSARADDGYEPVGKVATGITDEELERLHERLQPHVRTEDGTDVDIEPAVVFEVGYEEIQQSPTYGSGYALRFPRFVGVREDKSPSDADSLERIDRLTS.

An ATP-binding site is contributed by E252. K254 functions as the N6-AMP-lysine intermediate in the catalytic mechanism. Positions 259, 274, 303, 343, 414, and 420 each coordinate ATP.

It belongs to the ATP-dependent DNA ligase family. Mg(2+) serves as cofactor.

The catalysed reaction is ATP + (deoxyribonucleotide)n-3'-hydroxyl + 5'-phospho-(deoxyribonucleotide)m = (deoxyribonucleotide)n+m + AMP + diphosphate.. Functionally, DNA ligase that seals nicks in double-stranded DNA during DNA replication, DNA recombination and DNA repair. The sequence is that of DNA ligase from Natronomonas pharaonis (strain ATCC 35678 / DSM 2160 / CIP 103997 / JCM 8858 / NBRC 14720 / NCIMB 2260 / Gabara) (Halobacterium pharaonis).